Here is a 339-residue protein sequence, read N- to C-terminus: DNA-directed RNA polymerase subunit alpha (339 aa).

The interval Met1–Glu233 is alpha N-terminal domain (alpha-NTD). Positions Gly266–Phe339 are alpha C-terminal domain (alpha-CTD).

This sequence belongs to the RNA polymerase alpha chain family. In plastids the minimal PEP RNA polymerase catalytic core is composed of four subunits: alpha, beta, beta', and beta''. When a (nuclear-encoded) sigma factor is associated with the core the holoenzyme is formed, which can initiate transcription.

It is found in the plastid. The protein localises to the chloroplast. The enzyme catalyses RNA(n) + a ribonucleoside 5'-triphosphate = RNA(n+1) + diphosphate. Functionally, DNA-dependent RNA polymerase catalyzes the transcription of DNA into RNA using the four ribonucleoside triphosphates as substrates. The sequence is that of DNA-directed RNA polymerase subunit alpha from Elymus canadensis (Canada wild rye).